A 290-amino-acid chain; its full sequence is 4-hydroxybenzoate octaprenyltransferase (290 aa).

Transmembrane regions (helical) follow at residues I20–V40, L43–V63, E92–N112, L114–F131, F135–F155, G160–Y180, V209–L229, N231–Y251, and F266–V286.

It belongs to the UbiA prenyltransferase family. Requires Mg(2+) as cofactor.

Its subcellular location is the cell inner membrane. It carries out the reaction all-trans-octaprenyl diphosphate + 4-hydroxybenzoate = 4-hydroxy-3-(all-trans-octaprenyl)benzoate + diphosphate. Its pathway is cofactor biosynthesis; ubiquinone biosynthesis. Its function is as follows. Catalyzes the prenylation of para-hydroxybenzoate (PHB) with an all-trans polyprenyl group. Mediates the second step in the final reaction sequence of ubiquinone-8 (UQ-8) biosynthesis, which is the condensation of the polyisoprenoid side chain with PHB, generating the first membrane-bound Q intermediate 3-octaprenyl-4-hydroxybenzoate. In Nitrosospira multiformis (strain ATCC 25196 / NCIMB 11849 / C 71), this protein is 4-hydroxybenzoate octaprenyltransferase.